Consider the following 202-residue polypeptide: Small ribosomal subunit protein uS4c (202 aa).

An S4 RNA-binding domain is found at 90–151; the sequence is MRLDNTIFRL…KQKSRFIITK (62 aa).

Belongs to the universal ribosomal protein uS4 family. Part of the 30S ribosomal subunit. Contacts protein S5. The interaction surface between S4 and S5 is involved in control of translational fidelity.

The protein localises to the plastid. It is found in the chloroplast. Its function is as follows. One of the primary rRNA binding proteins, it binds directly to 16S rRNA where it nucleates assembly of the body of the 30S subunit. Functionally, with S5 and S12 plays an important role in translational accuracy. This chain is Small ribosomal subunit protein uS4c (rps4), found in Plagiochila adianthoides (Liverwort).